We begin with the raw amino-acid sequence, 289 residues long: Polyamine aminopropyltransferase (289 aa).

In terms of domain architecture, PABS spans 5-245 (PGPITLIEPL…YAVNFILGSL (241 aa)). Gln-36 contributes to the S-methyl-5'-thioadenosine binding site. The spermidine site is built by His-67 and Glu-91. S-methyl-5'-thioadenosine is bound by residues Asp-111 and 143–144 (DG). Asp-164 acts as the Proton acceptor in catalysis.

Belongs to the spermidine/spermine synthase family. Homodimer or homotetramer.

Its subcellular location is the cytoplasm. The catalysed reaction is S-adenosyl 3-(methylsulfanyl)propylamine + putrescine = S-methyl-5'-thioadenosine + spermidine + H(+). It participates in amine and polyamine biosynthesis; spermidine biosynthesis; spermidine from putrescine: step 1/1. Its function is as follows. Catalyzes the irreversible transfer of a propylamine group from the amino donor S-adenosylmethioninamine (decarboxy-AdoMet) to putrescine (1,4-diaminobutane) to yield spermidine. The polypeptide is Polyamine aminopropyltransferase (Pyrobaculum calidifontis (strain DSM 21063 / JCM 11548 / VA1)).